Consider the following 498-residue polypeptide: ATP synthase subunit beta, chloroplastic (498 aa).

Residue threonine 6 is modified to Phosphothreonine. A Phosphoserine modification is found at serine 13. Position 172-179 (172-179 (GGAGVGKT)) interacts with ATP.

It belongs to the ATPase alpha/beta chains family. In terms of assembly, F-type ATPases have 2 components, CF(1) - the catalytic core - and CF(0) - the membrane proton channel. CF(1) has five subunits: alpha(3), beta(3), gamma(1), delta(1), epsilon(1). CF(0) has four main subunits: a(1), b(1), b'(1) and c(9-12).

It localises to the plastid. The protein localises to the chloroplast thylakoid membrane. It catalyses the reaction ATP + H2O + 4 H(+)(in) = ADP + phosphate + 5 H(+)(out). Functionally, produces ATP from ADP in the presence of a proton gradient across the membrane. The catalytic sites are hosted primarily by the beta subunits. In Capsella bursa-pastoris (Shepherd's purse), this protein is ATP synthase subunit beta, chloroplastic.